The sequence spans 190 residues: Glutamyl-tRNA(Gln) amidotransferase subunit C, mitochondrial (190 aa).

The transit peptide at methionine 1 to phenylalanine 96 directs the protein to the mitochondrion. The segment at lysine 28–serine 57 is disordered.

Belongs to the GatC family. Subunit of the heterotrimeric GatCAB amidotransferase (AdT) complex, composed of A, B and C subunits.

The protein resides in the mitochondrion. It carries out the reaction L-glutamyl-tRNA(Gln) + L-glutamine + ATP + H2O = L-glutaminyl-tRNA(Gln) + L-glutamate + ADP + phosphate + H(+). Its function is as follows. Allows the formation of correctly charged Gln-tRNA(Gln) through the transamidation of misacylated Glu-tRNA(Gln) in the mitochondria. The reaction takes place in the presence of glutamine and ATP through an activated gamma-phospho-Glu-tRNA(Gln). The chain is Glutamyl-tRNA(Gln) amidotransferase subunit C, mitochondrial from Loa loa (Eye worm).